The primary structure comprises 419 residues: Protein arginine N-methyltransferase 8-B (419 aa).

The span at M1–R14 shows a compositional bias: basic residues. Positions M1–A79 are disordered. A lipid anchor (N-myristoyl glycine) is attached at G2. The span at Q33–H63 shows a compositional bias: low complexity. R83 carries the post-translational modification Omega-N-methylarginine. An Asymmetric dimethylarginine modification is found at R98. Residues R98–D402 enclose the SAM-dependent MTase PRMT-type domain. Residues H111, R120, G144, G144–T147, E166, and E195 each bind S-adenosyl-L-methionine. Catalysis depends on residues E210 and E219.

Belongs to the class I-like SAM-binding methyltransferase superfamily. Protein arginine N-methyltransferase family. PRMT8 subfamily. As to quaternary structure, homodimer. Tetramer; individual homodimers associates to form a homotetramer. Homooctamer; individual homodimers associates to form a homooctamer and homooligomerization is required for proper localization to the cell membrane.

It localises to the cell membrane. It carries out the reaction L-arginyl-[protein] + S-adenosyl-L-methionine = N(omega)-methyl-L-arginyl-[protein] + S-adenosyl-L-homocysteine + H(+). The catalysed reaction is L-arginyl-[protein] + 2 S-adenosyl-L-methionine = N(omega),N(omega)-dimethyl-L-arginyl-[protein] + 2 S-adenosyl-L-homocysteine + 2 H(+). Functionally, S-adenosyl-L-methionine-dependent and membrane-associated arginine methyltransferase that can both catalyze the formation of omega-N monomethylarginine (MMA) and asymmetrical dimethylarginine (aDMA). The protein is Protein arginine N-methyltransferase 8-B (prmt8b) of Danio rerio (Zebrafish).